Consider the following 325-residue polypeptide: Sel1-repeat-containing protein YbeQ (325 aa).

Sel1-like repeat units follow at residues 26–61 (EAQY…EQGH), 63–97 (EAQY…LQGH), 103–130 (ALGW…AESG), 132–167 (SYAQ…LQGH), 168–203 (SDAQ…QQGN), 205–239 (HAQF…AQGS), 242–275 (AYVN…ECND), and 280–305 (YNLA…LYRK).

This sequence to E.coli YbeT.

In Escherichia coli (strain K12), this protein is Sel1-repeat-containing protein YbeQ (ybeQ).